Here is a 321-residue protein sequence, read N- to C-terminus: Biotin synthase (321 aa).

One can recognise a Radical SAM core domain in the interval 44-270 (RGVRIHILNN…DAEVRAAGGR (227 aa)). [4Fe-4S] cluster contacts are provided by cysteine 59, cysteine 63, and cysteine 66. Positions 103, 135, 195, and 265 each coordinate [2Fe-2S] cluster.

The protein belongs to the radical SAM superfamily. Biotin synthase family. Homodimer. Requires [4Fe-4S] cluster as cofactor. It depends on [2Fe-2S] cluster as a cofactor.

It catalyses the reaction (4R,5S)-dethiobiotin + (sulfur carrier)-SH + 2 reduced [2Fe-2S]-[ferredoxin] + 2 S-adenosyl-L-methionine = (sulfur carrier)-H + biotin + 2 5'-deoxyadenosine + 2 L-methionine + 2 oxidized [2Fe-2S]-[ferredoxin]. Its pathway is cofactor biosynthesis; biotin biosynthesis; biotin from 7,8-diaminononanoate: step 2/2. Catalyzes the conversion of dethiobiotin (DTB) to biotin by the insertion of a sulfur atom into dethiobiotin via a radical-based mechanism. The polypeptide is Biotin synthase (Magnetococcus marinus (strain ATCC BAA-1437 / JCM 17883 / MC-1)).